The chain runs to 130 residues: Secreted cysteine-rich effector 2 (130 aa).

An N-terminal signal peptide occupies residues 1 to 23 (MLINAARLLLPAAALVHLSLAWA). The segment at 68-85 (LKNGEDWCKHCASPRVSV) is plant immunity suppression domain.

It localises to the secreted. It is found in the host cell. The protein localises to the host periplasm. Secreted effector required for full virulence of U.virens. Inhibits host pathogen-associated molecular pattern-triggered immunity including flg22- and chitin-induced defense gene expression and oxidative burst. The sequence is that of Secreted cysteine-rich effector 2 from Ustilaginoidea virens (Rice false smut fungus).